Here is a 236-residue protein sequence, read N- to C-terminus: Phosphoribosylaminoimidazole-succinocarboxamide synthase (236 aa).

This sequence belongs to the SAICAR synthetase family.

The catalysed reaction is 5-amino-1-(5-phospho-D-ribosyl)imidazole-4-carboxylate + L-aspartate + ATP = (2S)-2-[5-amino-1-(5-phospho-beta-D-ribosyl)imidazole-4-carboxamido]succinate + ADP + phosphate + 2 H(+). It functions in the pathway purine metabolism; IMP biosynthesis via de novo pathway; 5-amino-1-(5-phospho-D-ribosyl)imidazole-4-carboxamide from 5-amino-1-(5-phospho-D-ribosyl)imidazole-4-carboxylate: step 1/2. The protein is Phosphoribosylaminoimidazole-succinocarboxamide synthase of Chlorobium limicola (strain DSM 245 / NBRC 103803 / 6330).